The sequence spans 121 residues: MAMKIRLARGGSKKRPFYRIVAADSRMPRDGRFIEKLGTYNPLLPKDSEERVKMDIEKIQAWLDKGAQPTDRVARMLEAAGVREKTERNNPNKAKPGKKAQERAEEKAAKAAEAAEAADAE.

The interval 80-121 (AGVREKTERNNPNKAKPGKKAQERAEEKAAKAAEAAEAADAE) is disordered. Composition is skewed to basic and acidic residues over residues 81 to 90 (GVREKTERNN) and 99 to 110 (KAQERAEEKAAK).

This sequence belongs to the bacterial ribosomal protein bS16 family.

This Ruegeria sp. (strain TM1040) (Silicibacter sp.) protein is Small ribosomal subunit protein bS16.